Consider the following 267-residue polypeptide: tRNA pseudouridine synthase A (267 aa).

The active-site Nucleophile is Asp55. A substrate-binding site is contributed by Tyr111.

The protein belongs to the tRNA pseudouridine synthase TruA family.

It carries out the reaction uridine(38/39/40) in tRNA = pseudouridine(38/39/40) in tRNA. In terms of biological role, formation of pseudouridine at positions 38, 39 and 40 in the anticodon stem and loop of transfer RNAs. The chain is tRNA pseudouridine synthase A from Thermococcus gammatolerans (strain DSM 15229 / JCM 11827 / EJ3).